Reading from the N-terminus, the 414-residue chain is Snake venom metalloproteinase atrolysin-D (414 aa).

A signal peptide spans 1–20; that stretch reads MIEVLLVTICLAVFPYQGSS. The propeptide occupies 21–190; the sequence is IILESGNVND…KASDLNLNPD (170 aa). Gln-191 bears the Pyrrolidone carboxylic acid mark. Positions 197–393 constitute a Peptidase M12B domain; the sequence is RYIELVVVAD…YKPQCILNKP (197 aa). Residues Glu-200 and Asp-284 each coordinate Ca(2+). Disulfide bonds link Cys-308–Cys-388 and Cys-348–Cys-355. Position 333 (His-333) interacts with Zn(2+). Glu-334 is a catalytic residue. Residues His-337 and His-343 each coordinate Zn(2+). Ca(2+) is bound by residues Cys-388 and Asn-391. Residues 394 to 414 constitute a propeptide that is removed on maturation; sequence LRIDPVSTPVSGNELLEAGEE.

It belongs to the venom metalloproteinase (M12B) family. P-I subfamily. Monomer. It depends on Zn(2+) as a cofactor. Post-translationally, the N-terminus is blocked. As to expression, expressed by the venom gland.

It is found in the secreted. The enzyme catalyses Cleavage of 5-His-|-Leu-6, 10-His-|-Leu-11, 14-Ala-|-Leu-15, 16-Tyr-|-Leu-17 and 23-Gly-|-Phe-24 of insulin B chain. With small molecule substrates prefers hydrophobic residue at P2' and small residue such as Ala, Gly at P1.. Its function is as follows. Snake venom zinc metalloproteinase that causes hemorrhage by provoking the degradation of the sub-endothelial matrix proteins (fibronectin, laminin, type IV collagen, nidogen, and gelatins). This Crotalus atrox (Western diamondback rattlesnake) protein is Snake venom metalloproteinase atrolysin-D.